The following is a 777-amino-acid chain: Serine/threonine-protein kinase PTK2 (777 aa).

A disordered region spans residues 21-174 (NKLRGNNDST…ISSGSASSTN (154 aa)). Positions 30–41 (TPAAAPAPVPTK) are enriched in low complexity. Polar residues-rich tracts occupy residues 50–61 (AHISRSASTNTP) and 83–133 (RRST…SQHM). Low complexity predominate over residues 149–172 (SSVRGSSYSRHGSGSHISSGSASS). The 308-residue stretch at 222 to 529 (DKDNKTIGSG…MEDLFNDPWF (308 aa)) folds into the Protein kinase domain. Residues 228-236 (IGSGGSSEV) and Lys-252 contribute to the ATP site. Residue Asp-355 is the Proton acceptor of the active site. Disordered regions lie at residues 564-705 (DAHP…EITE) and 728-764 (SVSGAATAPIPRRDPSNRSIHSNATSTGTAGRKKKVV). Composition is skewed to polar residues over residues 575 to 592 (TDTNGGLHSDSENPAGTH) and 648 to 672 (TNTTAEADNEKAQTVPTSAVDTNEF). Low complexity predominate over residues 677–694 (NATTTDNDNVNTKATTAD). A compositionally biased stretch (polar residues) spans 744–756 (NRSIHSNATSTGT).

Belongs to the protein kinase superfamily. Ser/Thr protein kinase family.

It carries out the reaction L-seryl-[protein] + ATP = O-phospho-L-seryl-[protein] + ADP + H(+). The catalysed reaction is L-threonyl-[protein] + ATP = O-phospho-L-threonyl-[protein] + ADP + H(+). The polypeptide is Serine/threonine-protein kinase PTK2 (PTK2) (Candida glabrata (strain ATCC 2001 / BCRC 20586 / JCM 3761 / NBRC 0622 / NRRL Y-65 / CBS 138) (Yeast)).